A 134-amino-acid polypeptide reads, in one-letter code: uncharacterized protein (134 aa).

This is an uncharacterized protein from Thermoproteus tenax virus 1 (strain KRA1) (TTV1).